The sequence spans 229 residues: UPF0758 protein Cagg_0777 (229 aa).

Residues 105–227 enclose the MPN domain; sequence PIRSPGDVAA…YVSLRERGIG (123 aa). Zn(2+) is bound by residues histidine 176, histidine 178, and aspartate 189. A JAMM motif motif is present at residues 176 to 189; it reads HNHPSGEATPSPED.

This sequence belongs to the UPF0758 family.

In Chloroflexus aggregans (strain MD-66 / DSM 9485), this protein is UPF0758 protein Cagg_0777.